The primary structure comprises 294 residues: Phosphoribosylaminoimidazole-succinocarboxamide synthase (294 aa).

It belongs to the SAICAR synthetase family.

It catalyses the reaction 5-amino-1-(5-phospho-D-ribosyl)imidazole-4-carboxylate + L-aspartate + ATP = (2S)-2-[5-amino-1-(5-phospho-beta-D-ribosyl)imidazole-4-carboxamido]succinate + ADP + phosphate + 2 H(+). The protein operates within purine metabolism; IMP biosynthesis via de novo pathway; 5-amino-1-(5-phospho-D-ribosyl)imidazole-4-carboxamide from 5-amino-1-(5-phospho-D-ribosyl)imidazole-4-carboxylate: step 1/2. The polypeptide is Phosphoribosylaminoimidazole-succinocarboxamide synthase (Thermoplasma acidophilum (strain ATCC 25905 / DSM 1728 / JCM 9062 / NBRC 15155 / AMRC-C165)).